The chain runs to 191 residues: Molybdenum cofactor guanylyltransferase (191 aa).

GTP contacts are provided by residues 11-13 (LCG), lysine 23, aspartate 66, and aspartate 97. Mg(2+) is bound at residue aspartate 97.

This sequence belongs to the MobA family. Monomer. It depends on Mg(2+) as a cofactor.

It localises to the cytoplasm. It carries out the reaction Mo-molybdopterin + GTP + H(+) = Mo-molybdopterin guanine dinucleotide + diphosphate. Functionally, transfers a GMP moiety from GTP to Mo-molybdopterin (Mo-MPT) cofactor (Moco or molybdenum cofactor) to form Mo-molybdopterin guanine dinucleotide (Mo-MGD) cofactor. The protein is Molybdenum cofactor guanylyltransferase of Campylobacter jejuni subsp. doylei (strain ATCC BAA-1458 / RM4099 / 269.97).